Reading from the N-terminus, the 261-residue chain is Cytochrome c oxidase subunit 3 (261 aa).

The Mitochondrial matrix segment spans residues 1–15 (MAHQSHAYHMVKPSP). Residues 16–34 (WPLTGALSALLTTSGLTMW) traverse the membrane as a helical segment. Residues 35–40 (FHFHST) are Mitochondrial intermembrane-facing. The helical transmembrane segment at 41–66 (TLLLTGLLTNALTMYQWWRDVVREST) threads the bilayer. At 67 to 72 (YQGHHT) the chain is on the mitochondrial matrix side. A helical transmembrane segment spans residues 73-105 (LPVQKGLRYGMILFITSEVFFFAGFFWAFYHSS). Residues 106–128 (LAPTPQLGGHWPPTGIIPLNPLE) lie on the Mitochondrial intermembrane side of the membrane. A helical membrane pass occupies residues 129-152 (VPLLNTSVLLASGVSITWAHHSLM). Topologically, residues 153–155 (ENN) are mitochondrial matrix. Residues 156–183 (RTQMIQALLITILLGIYFTLLQASEYIE) traverse the membrane as a helical segment. Over 184–190 (APFTISD) the chain is Mitochondrial intermembrane. A helical membrane pass occupies residues 191–223 (GIYGSTFFMATGFHGLHVIIGSTFLTVCLARQL). Residues 224–232 (LFHFTSKHH) are Mitochondrial matrix-facing. A helical transmembrane segment spans residues 233-256 (FGFEAAAWYWHFVDVVWLFLYVSI). Residues 257–261 (YWWGS) lie on the Mitochondrial intermembrane side of the membrane.

This sequence belongs to the cytochrome c oxidase subunit 3 family. In terms of assembly, component of the cytochrome c oxidase (complex IV, CIV), a multisubunit enzyme composed of 14 subunits. The complex is composed of a catalytic core of 3 subunits MT-CO1, MT-CO2 and MT-CO3, encoded in the mitochondrial DNA, and 11 supernumerary subunits COX4I, COX5A, COX5B, COX6A, COX6B, COX6C, COX7A, COX7B, COX7C, COX8 and NDUFA4, which are encoded in the nuclear genome. The complex exists as a monomer or a dimer and forms supercomplexes (SCs) in the inner mitochondrial membrane with NADH-ubiquinone oxidoreductase (complex I, CI) and ubiquinol-cytochrome c oxidoreductase (cytochrome b-c1 complex, complex III, CIII), resulting in different assemblies (supercomplex SCI(1)III(2)IV(1) and megacomplex MCI(2)III(2)IV(2)).

It localises to the mitochondrion inner membrane. It carries out the reaction 4 Fe(II)-[cytochrome c] + O2 + 8 H(+)(in) = 4 Fe(III)-[cytochrome c] + 2 H2O + 4 H(+)(out). Functionally, component of the cytochrome c oxidase, the last enzyme in the mitochondrial electron transport chain which drives oxidative phosphorylation. The respiratory chain contains 3 multisubunit complexes succinate dehydrogenase (complex II, CII), ubiquinol-cytochrome c oxidoreductase (cytochrome b-c1 complex, complex III, CIII) and cytochrome c oxidase (complex IV, CIV), that cooperate to transfer electrons derived from NADH and succinate to molecular oxygen, creating an electrochemical gradient over the inner membrane that drives transmembrane transport and the ATP synthase. Cytochrome c oxidase is the component of the respiratory chain that catalyzes the reduction of oxygen to water. Electrons originating from reduced cytochrome c in the intermembrane space (IMS) are transferred via the dinuclear copper A center (CU(A)) of subunit 2 and heme A of subunit 1 to the active site in subunit 1, a binuclear center (BNC) formed by heme A3 and copper B (CU(B)). The BNC reduces molecular oxygen to 2 water molecules using 4 electrons from cytochrome c in the IMS and 4 protons from the mitochondrial matrix. The chain is Cytochrome c oxidase subunit 3 (MT-CO3) from Pongo abelii (Sumatran orangutan).